A 330-amino-acid polypeptide reads, in one-letter code: Anthranilate phosphoribosyltransferase (330 aa).

Residues glycine 79, 82 to 83 (GD), threonine 87, 89 to 92 (NIST), 107 to 115 (KHGNYGVSS), and serine 119 contribute to the 5-phospho-alpha-D-ribose 1-diphosphate site. Glycine 79 provides a ligand contact to anthranilate. Position 91 (serine 91) interacts with Mg(2+). Asparagine 110 contacts anthranilate. Arginine 165 serves as a coordination point for anthranilate. Mg(2+) is bound by residues aspartate 223 and glutamate 224.

Belongs to the anthranilate phosphoribosyltransferase family. Homodimer. Mg(2+) is required as a cofactor.

It carries out the reaction N-(5-phospho-beta-D-ribosyl)anthranilate + diphosphate = 5-phospho-alpha-D-ribose 1-diphosphate + anthranilate. It functions in the pathway amino-acid biosynthesis; L-tryptophan biosynthesis; L-tryptophan from chorismate: step 2/5. Functionally, catalyzes the transfer of the phosphoribosyl group of 5-phosphorylribose-1-pyrophosphate (PRPP) to anthranilate to yield N-(5'-phosphoribosyl)-anthranilate (PRA). The chain is Anthranilate phosphoribosyltransferase from Flavobacterium johnsoniae (strain ATCC 17061 / DSM 2064 / JCM 8514 / BCRC 14874 / CCUG 350202 / NBRC 14942 / NCIMB 11054 / UW101) (Cytophaga johnsonae).